The following is a 117-amino-acid chain: Ig heavy chain V region MOPC 104E (117 aa).

The 116-residue stretch at 1–116 (EVQLQQSGPE…WGAGTTVTVS (116 aa)) folds into the Ig-like domain. An intrachain disulfide couples C22 to C96. The N-linked (GlcNAc...) (high mannose) asparagine; atypical glycan is linked to N55.

The polypeptide is Ig heavy chain V region MOPC 104E (Mus musculus (Mouse)).